The chain runs to 304 residues: Signal recognition particle receptor FtsY (304 aa).

GTP is bound by residues 109 to 116 (GVNGVGKT), 191 to 195 (DTAGR), and 255 to 258 (TKLD).

This sequence belongs to the GTP-binding SRP family. FtsY subfamily. In terms of assembly, part of the signal recognition particle protein translocation system, which is composed of SRP and FtsY. Sensitive to endogenous proteolytic cleavage between residues 18 and 19 and between residues 86 and 87.

It is found in the cell membrane. The protein resides in the cytoplasm. It carries out the reaction GTP + H2O = GDP + phosphate + H(+). Its function is as follows. Involved in targeting and insertion of nascent membrane proteins into the cytoplasmic membrane. Acts as a receptor for the complex formed by the signal recognition particle (SRP) and the ribosome-nascent chain (RNC). The protein is Signal recognition particle receptor FtsY of Thermus aquaticus.